Reading from the N-terminus, the 646-residue chain is Esterase EstA (646 aa).

An N-terminal signal peptide occupies residues methionine 1 to alanine 24. At alanine 25–glycine 397 the chain is on the extracellular side. Catalysis depends on serine 38, which acts as the Nucleophile. Active-site residues include aspartate 310 and histidine 313. The Autotransporter domain occupies glutamine 366–phenylalanine 646. A beta stranded transmembrane segment spans residues tyrosine 398–isoleucine 408. The Periplasmic segment spans residues aspartate 409–glutamate 410. A beta stranded membrane pass occupies residues alanine 411–tyrosine 421. The Extracellular segment spans residues arginine 422 to asparagine 437. A beta stranded membrane pass occupies residues serine 438–tyrosine 447. Topologically, residues glutamine 448–arginine 451 are periplasmic. A beta stranded transmembrane segment spans residues tryptophan 452–glycine 461. Topologically, residues tyrosine 462–histidine 488 are extracellular. Residues leucine 489 to isoleucine 500 traverse the membrane as a beta stranded segment. Residues alanine 501 to proline 507 are Periplasmic-facing. Residues tryptophan 508 to tyrosine 518 traverse the membrane as a beta stranded segment. The Extracellular segment spans residues alanine 519–arginine 547. Residues leucine 548–phenylalanine 558 traverse the membrane as a beta stranded segment. Residues glycine 559 to aspartate 561 are Periplasmic-facing. Residues threonine 562 to glutamate 571 form a beta stranded membrane-spanning segment. The Extracellular portion of the chain corresponds to arginine 572 to asparagine 605. A beta stranded transmembrane segment spans residues arginine 606 to leucine 615. Residues alanine 616–glutamate 618 are Periplasmic-facing. The chain crosses the membrane as a beta stranded span at residues leucine 619–arginine 628. Residues lysine 629–glutamine 636 lie on the Extracellular side of the membrane. A beta stranded transmembrane segment spans residues serine 637–phenylalanine 646.

The protein belongs to the 'GDSL' lipolytic enzyme family.

It localises to the cell outer membrane. It carries out the reaction a carboxylic ester + H2O = an alcohol + a carboxylate + H(+). Esterase whose enzymatic activity is required for rhamnolipid production, all kinds of cell motility (swimming, swarming, and twitching), and biofilm formation; the exact role of EstA in these processes is unclear. In vitro, has pronounced esterase activities towards p-nitrophenyl esters of short acyl chain length (C4-C6) and Tween detergents. Also shows relatively high activity towards beta-naphthyl butyrate, whereas its activities towards triacylglycerols and acyls-CoA are negligible. This is Esterase EstA (estA) from Pseudomonas aeruginosa (strain ATCC 15692 / DSM 22644 / CIP 104116 / JCM 14847 / LMG 12228 / 1C / PRS 101 / PAO1).